A 691-amino-acid chain; its full sequence is Methionine--tRNA ligase (691 aa).

A 'HIGH' region motif is present at residues 12-22 (PYANGSFHIGH). Zn(2+)-binding residues include cysteine 143, cysteine 146, cysteine 156, and cysteine 159. The 'KMSKS' region motif lies at 341–345 (KMSKS). An ATP-binding site is contributed by lysine 344. The tRNA-binding domain maps to 585-691 (DFVKVDLRIA…PGAQPGMRIH (107 aa)).

This sequence belongs to the class-I aminoacyl-tRNA synthetase family. MetG type 1 subfamily. As to quaternary structure, homodimer. Zn(2+) is required as a cofactor.

The protein localises to the cytoplasm. The catalysed reaction is tRNA(Met) + L-methionine + ATP = L-methionyl-tRNA(Met) + AMP + diphosphate. Functionally, is required not only for elongation of protein synthesis but also for the initiation of all mRNA translation through initiator tRNA(fMet) aminoacylation. In Bordetella avium (strain 197N), this protein is Methionine--tRNA ligase.